A 540-amino-acid chain; its full sequence is DNA topoisomerase 1 (540 aa).

Positions 1-110 (MELFIVESPT…NIKRAVFYEI (110 aa)) constitute a Toprim domain. Mg(2+) contacts are provided by Glu-7 and Asp-79. The Topo IA-type catalytic domain maps to 126–536 (NMNLVYAQFA…FMEKIFGKEL (411 aa)). The interaction with DNA stretch occupies residues 161 to 166 (SAGRVQ). Tyr-281 serves as the catalytic O-(5'-phospho-DNA)-tyrosine intermediate.

It belongs to the type IA topoisomerase family. As to quaternary structure, monomer. The cofactor is Mg(2+).

The enzyme catalyses ATP-independent breakage of single-stranded DNA, followed by passage and rejoining.. Its function is as follows. Releases the supercoiling and torsional tension of DNA, which is introduced during the DNA replication and transcription, by transiently cleaving and rejoining one strand of the DNA duplex. Introduces a single-strand break via transesterification at a target site in duplex DNA. The scissile phosphodiester is attacked by the catalytic tyrosine of the enzyme, resulting in the formation of a DNA-(5'-phosphotyrosyl)-enzyme intermediate and the expulsion of a 3'-OH DNA strand. The free DNA strand then undergoes passage around the unbroken strand, thus removing DNA supercoils. Finally, in the religation step, the DNA 3'-OH attacks the covalent intermediate to expel the active-site tyrosine and restore the DNA phosphodiester backbone. The chain is DNA topoisomerase 1 from Aquifex aeolicus (strain VF5).